A 130-amino-acid polypeptide reads, in one-letter code: Large ribosomal subunit protein bL19 (130 aa).

It belongs to the bacterial ribosomal protein bL19 family.

In terms of biological role, this protein is located at the 30S-50S ribosomal subunit interface and may play a role in the structure and function of the aminoacyl-tRNA binding site. In Burkholderia lata (strain ATCC 17760 / DSM 23089 / LMG 22485 / NCIMB 9086 / R18194 / 383), this protein is Large ribosomal subunit protein bL19.